A 213-amino-acid chain; its full sequence is Protein big brother (213 aa).

The protein belongs to the CBF-beta family.

It localises to the nucleus. In terms of biological role, regulates the DNA-binding properties of Runt. The protein is Protein big brother (Bgb) of Drosophila melanogaster (Fruit fly).